A 148-amino-acid chain; its full sequence is 1,4-dihydroxy-2-naphthoyl-CoA hydrolase (148 aa).

Asp-15 is a catalytic residue.

This sequence belongs to the 4-hydroxybenzoyl-CoA thioesterase family. DHNA-CoA hydrolase subfamily.

It carries out the reaction 1,4-dihydroxy-2-naphthoyl-CoA + H2O = 1,4-dihydroxy-2-naphthoate + CoA + H(+). It functions in the pathway cofactor biosynthesis; phylloquinone biosynthesis. It participates in quinol/quinone metabolism; 1,4-dihydroxy-2-naphthoate biosynthesis; 1,4-dihydroxy-2-naphthoate from chorismate: step 7/7. Its function is as follows. Catalyzes the hydrolysis of 1,4-dihydroxy-2-naphthoyl-CoA (DHNA-CoA) to 1,4-dihydroxy-2-naphthoate (DHNA), a reaction involved in phylloquinone (vitamin K1) biosynthesis. The sequence is that of 1,4-dihydroxy-2-naphthoyl-CoA hydrolase from Nostoc sp. (strain PCC 7120 / SAG 25.82 / UTEX 2576).